Here is a 362-residue protein sequence, read N- to C-terminus: Microfibril-associated glycoprotein 3 (362 aa).

The N-terminal stretch at 1-18 (MKLHCCLFTLVASIIVPA) is a signal peptide. Over 19-147 (AFVLEDVDFD…LRVIFTSGDM (129 aa)) the chain is Extracellular. 3 N-linked (GlcNAc...) asparagine glycosylation sites follow: Asn36, Asn41, and Asn110. One can recognise an Ig-like C2-type domain in the interval 45–137 (PSSFELSASS…SPIRASYSVT (93 aa)). A disulfide bridge links Cys73 with Cys124. Residues 148–170 (SVYYMIVCLIAFTITLILNVTRL) form a helical membrane-spanning segment. Residues 171–362 (CMMSSHLRKT…KDGAYENCQL (192 aa)) are Cytoplasmic-facing. Disordered stretches follow at residues 285–306 (VINPEMGRSNSPGGDSDDGSLN) and 323–350 (ETKSIDTESQGSSHFSPPDDIGSAESNC). Over residues 323–337 (ETKSIDTESQGSSHF) the composition is skewed to polar residues.

Glycosylated.

It is found in the cell membrane. Component of the elastin-associated microfibrils. The sequence is that of Microfibril-associated glycoprotein 3 (MFAP3) from Homo sapiens (Human).